A 140-amino-acid polypeptide reads, in one-letter code: Nucleoside diphosphate kinase (140 aa).

6 residues coordinate ATP: Lys-11, Phe-59, Arg-87, Thr-93, Arg-104, and Asn-114. His-117 (pros-phosphohistidine intermediate) is an active-site residue.

The protein belongs to the NDK family. In terms of assembly, homotetramer. The cofactor is Mg(2+).

The protein resides in the cytoplasm. The catalysed reaction is a 2'-deoxyribonucleoside 5'-diphosphate + ATP = a 2'-deoxyribonucleoside 5'-triphosphate + ADP. The enzyme catalyses a ribonucleoside 5'-diphosphate + ATP = a ribonucleoside 5'-triphosphate + ADP. Functionally, major role in the synthesis of nucleoside triphosphates other than ATP. The ATP gamma phosphate is transferred to the NDP beta phosphate via a ping-pong mechanism, using a phosphorylated active-site intermediate. This chain is Nucleoside diphosphate kinase, found in Bradyrhizobium diazoefficiens (strain JCM 10833 / BCRC 13528 / IAM 13628 / NBRC 14792 / USDA 110).